Here is a 428-residue protein sequence, read N- to C-terminus: Enolase (428 aa).

Residue Gln167 participates in (2R)-2-phosphoglycerate binding. Glu209 functions as the Proton donor in the catalytic mechanism. The Mg(2+) site is built by Asp246, Glu289, and Asp316. Lys341, Arg370, Ser371, and Lys392 together coordinate (2R)-2-phosphoglycerate. Residue Lys341 is the Proton acceptor of the active site.

This sequence belongs to the enolase family. In terms of assembly, component of the RNA degradosome, a multiprotein complex involved in RNA processing and mRNA degradation. Requires Mg(2+) as cofactor.

It localises to the cytoplasm. The protein resides in the secreted. The protein localises to the cell surface. The catalysed reaction is (2R)-2-phosphoglycerate = phosphoenolpyruvate + H2O. It functions in the pathway carbohydrate degradation; glycolysis; pyruvate from D-glyceraldehyde 3-phosphate: step 4/5. In terms of biological role, catalyzes the reversible conversion of 2-phosphoglycerate (2-PG) into phosphoenolpyruvate (PEP). It is essential for the degradation of carbohydrates via glycolysis. In Saccharophagus degradans (strain 2-40 / ATCC 43961 / DSM 17024), this protein is Enolase.